We begin with the raw amino-acid sequence, 184 residues long: ATP synthase subunit delta (184 aa).

The protein belongs to the ATPase delta chain family. As to quaternary structure, F-type ATPases have 2 components, F(1) - the catalytic core - and F(0) - the membrane proton channel. F(1) has five subunits: alpha(3), beta(3), gamma(1), delta(1), epsilon(1). F(0) has three main subunits: a(1), b(2) and c(10-14). The alpha and beta chains form an alternating ring which encloses part of the gamma chain. F(1) is attached to F(0) by a central stalk formed by the gamma and epsilon chains, while a peripheral stalk is formed by the delta and b chains.

It localises to the cell membrane. In terms of biological role, f(1)F(0) ATP synthase produces ATP from ADP in the presence of a proton or sodium gradient. F-type ATPases consist of two structural domains, F(1) containing the extramembraneous catalytic core and F(0) containing the membrane proton channel, linked together by a central stalk and a peripheral stalk. During catalysis, ATP synthesis in the catalytic domain of F(1) is coupled via a rotary mechanism of the central stalk subunits to proton translocation. Its function is as follows. This protein is part of the stalk that links CF(0) to CF(1). It either transmits conformational changes from CF(0) to CF(1) or is implicated in proton conduction. The polypeptide is ATP synthase subunit delta (Wolbachia pipientis subsp. Culex pipiens (strain wPip)).